Reading from the N-terminus, the 214-residue chain is Ornithine decarboxylase antizyme 1 (214 aa).

It belongs to the ODC antizyme family. In terms of assembly, interacts with ODC1 and thereby sterically blocks ODC homodimerization.

Its function is as follows. Ornithine decarboxylase (ODC) antizyme protein that negatively regulates ODC activity and intracellular polyamine biosynthesis and uptake in response to increased intracellular polyamine levels. Binds to ODC monomers, inhibiting the assembly of the functional ODC homodimer, and targets the monomers for ubiquitin-independent proteolytic destruction by the 26S proteasome. The chain is Ornithine decarboxylase antizyme 1 (oaz1a) from Danio rerio (Zebrafish).